A 333-amino-acid polypeptide reads, in one-letter code: L-lactate dehydrogenase B chain (333 aa).

Residues 29–57 and Arg99 contribute to the NAD(+) site; that span reads GQVGMACAISILGKGLCDELALVDVWEDK. Residues Arg106, Asn138, and Arg169 each contribute to the substrate site. NAD(+) is bound at residue Asn138. His193 (proton acceptor) is an active-site residue. Thr248 lines the substrate pocket.

This sequence belongs to the LDH/MDH superfamily. LDH family. As to quaternary structure, homotetramer.

It is found in the cytoplasm. The enzyme catalyses (S)-lactate + NAD(+) = pyruvate + NADH + H(+). It functions in the pathway fermentation; pyruvate fermentation to lactate; (S)-lactate from pyruvate: step 1/1. Its function is as follows. Interconverts simultaneously and stereospecifically pyruvate and lactate with concomitant interconversion of NADH and NAD(+). In Trachemys scripta elegans (Red-eared slider turtle), this protein is L-lactate dehydrogenase B chain (LDHB).